Here is a 158-residue protein sequence, read N- to C-terminus: MSRRRRAVKREILPDPKFGDIVITRFMNALMYDGKKSVAEGIVYGALDVLKKRGGNQADPVRMFHEALDNVKPAVEVRSRRVGGATYQVPVEVRADRRQALAIRWIIDASRKRGEHTMEERLSNELLDAVHNRGSAVKKREDTHRMAEANKAFSHYRW.

It belongs to the universal ribosomal protein uS7 family. As to quaternary structure, part of the 30S ribosomal subunit. Contacts proteins S9 and S11.

Functionally, one of the primary rRNA binding proteins, it binds directly to 16S rRNA where it nucleates assembly of the head domain of the 30S subunit. Is located at the subunit interface close to the decoding center, probably blocks exit of the E-site tRNA. This is Small ribosomal subunit protein uS7 from Granulibacter bethesdensis (strain ATCC BAA-1260 / CGDNIH1).